Consider the following 218-residue polypeptide: Ribose-5-phosphate isomerase A (218 aa).

Substrate is bound by residues 28-31 (TGST), 81-84 (DGAD), and 94-97 (KGGG). The active-site Proton acceptor is the E103. K121 lines the substrate pocket.

Belongs to the ribose 5-phosphate isomerase family. As to quaternary structure, homodimer.

It carries out the reaction aldehydo-D-ribose 5-phosphate = D-ribulose 5-phosphate. The protein operates within carbohydrate degradation; pentose phosphate pathway; D-ribose 5-phosphate from D-ribulose 5-phosphate (non-oxidative stage): step 1/1. Catalyzes the reversible conversion of ribose-5-phosphate to ribulose 5-phosphate. The polypeptide is Ribose-5-phosphate isomerase A (Vibrio cholerae serotype O1 (strain ATCC 39541 / Classical Ogawa 395 / O395)).